The primary structure comprises 168 residues: Leghemoglobin 5 (168 aa).

The 161-residue stretch at 3–163 (AFTEKQEALV…IAAAIKKAMA (161 aa)) folds into the Globin domain. Heme b is bound at residue S63. S63 carries the phosphoserine modification. H79 provides a ligand contact to O2. Heme b contacts are provided by K82, H110, and K113. Y151 carries the post-translational modification Nitrated tyrosine.

The protein belongs to the plant globin family. As to quaternary structure, monomer. Post-translationally, nitrated in effective nodules and particularly in hypoxic conditions; this mechanism may play a protective role in the symbiosis by buffering toxic peroxynitrite NO(2)(-). Nitration level decrease during nodule senescence. In terms of processing, phosphorylation at Ser-63 disrupts the molecular environment of its porphyrin ring oxygen binding pocket, thus leading to a reduced oxygen consumption and to the delivery of oxygen O(2) to symbiosomes. Expressed in root nodules and flowers.

It is found in the cytoplasm. The protein resides in the cytosol. It localises to the nucleus. Leghemoglobin that reversibly binds oxygen O(2) through a pentacoordinated heme iron. In root nodules, facilitates the diffusion of oxygen to the bacteroids while preventing the bacterial nitrogenase from being inactivated by buffering dioxygen, nitric oxide and carbon monoxide, and promoting the formation of reactive oxygen species (ROS, e.g. H(2)O(2)). This role is essential for symbiotic nitrogen fixation (SNF). Maybe involved in water stress tolerance. The polypeptide is Leghemoglobin 5 (Glycine max (Soybean)).